The primary structure comprises 264 residues: Thymidylate synthase (264 aa).

Arg-21 provides a ligand contact to dUMP. His-51 lines the (6R)-5,10-methylene-5,6,7,8-tetrahydrofolate pocket. Residue 126-127 (RR) coordinates dUMP. Catalysis depends on Cys-146, which acts as the Nucleophile. Residues 166–169 (RSCD), Asn-177, and 207–209 (HLY) contribute to the dUMP site. Asp-169 is a (6R)-5,10-methylene-5,6,7,8-tetrahydrofolate binding site. Residue Ser-263 coordinates (6R)-5,10-methylene-5,6,7,8-tetrahydrofolate.

Belongs to the thymidylate synthase family. Bacterial-type ThyA subfamily. As to quaternary structure, homodimer.

The protein localises to the cytoplasm. The enzyme catalyses dUMP + (6R)-5,10-methylene-5,6,7,8-tetrahydrofolate = 7,8-dihydrofolate + dTMP. It participates in pyrimidine metabolism; dTTP biosynthesis. In terms of biological role, catalyzes the reductive methylation of 2'-deoxyuridine-5'-monophosphate (dUMP) to 2'-deoxythymidine-5'-monophosphate (dTMP) while utilizing 5,10-methylenetetrahydrofolate (mTHF) as the methyl donor and reductant in the reaction, yielding dihydrofolate (DHF) as a by-product. This enzymatic reaction provides an intracellular de novo source of dTMP, an essential precursor for DNA biosynthesis. The protein is Thymidylate synthase of Wigglesworthia glossinidia brevipalpis.